The chain runs to 462 residues: Bifunctional protein GlmU (462 aa).

Residues 1 to 239 are pyrophosphorylase; sequence MTESVSKPVR…EASVQGVNAQ (239 aa). Residues 17–20, lysine 31, glutamine 84, and 89–90 contribute to the UDP-N-acetyl-alpha-D-glucosamine site; these read LAAG and GT. Aspartate 114 is a binding site for Mg(2+). Glycine 150, glutamate 165, asparagine 180, and asparagine 237 together coordinate UDP-N-acetyl-alpha-D-glucosamine. Position 237 (asparagine 237) interacts with Mg(2+). The linker stretch occupies residues 240 to 260; the sequence is AELAAAEAVWQQNRRKALMVD. Positions 261–462 are N-acetyltransferase; sequence GVTMPAPDTV…QKDKKKDKKA (202 aa). UDP-N-acetyl-alpha-D-glucosamine is bound by residues arginine 326 and lysine 344. The active-site Proton acceptor is the histidine 356. The UDP-N-acetyl-alpha-D-glucosamine site is built by tyrosine 359 and asparagine 370. Residues alanine 373, 379–380, serine 398, serine 416, and arginine 433 each bind acetyl-CoA; that span reads NY.

It in the N-terminal section; belongs to the N-acetylglucosamine-1-phosphate uridyltransferase family. In the C-terminal section; belongs to the transferase hexapeptide repeat family. In terms of assembly, homotrimer. Requires Mg(2+) as cofactor.

It is found in the cytoplasm. It catalyses the reaction alpha-D-glucosamine 1-phosphate + acetyl-CoA = N-acetyl-alpha-D-glucosamine 1-phosphate + CoA + H(+). The enzyme catalyses N-acetyl-alpha-D-glucosamine 1-phosphate + UTP + H(+) = UDP-N-acetyl-alpha-D-glucosamine + diphosphate. It functions in the pathway nucleotide-sugar biosynthesis; UDP-N-acetyl-alpha-D-glucosamine biosynthesis; N-acetyl-alpha-D-glucosamine 1-phosphate from alpha-D-glucosamine 6-phosphate (route II): step 2/2. Its pathway is nucleotide-sugar biosynthesis; UDP-N-acetyl-alpha-D-glucosamine biosynthesis; UDP-N-acetyl-alpha-D-glucosamine from N-acetyl-alpha-D-glucosamine 1-phosphate: step 1/1. It participates in bacterial outer membrane biogenesis; LPS lipid A biosynthesis. Functionally, catalyzes the last two sequential reactions in the de novo biosynthetic pathway for UDP-N-acetylglucosamine (UDP-GlcNAc). The C-terminal domain catalyzes the transfer of acetyl group from acetyl coenzyme A to glucosamine-1-phosphate (GlcN-1-P) to produce N-acetylglucosamine-1-phosphate (GlcNAc-1-P), which is converted into UDP-GlcNAc by the transfer of uridine 5-monophosphate (from uridine 5-triphosphate), a reaction catalyzed by the N-terminal domain. The sequence is that of Bifunctional protein GlmU from Caulobacter vibrioides (strain ATCC 19089 / CIP 103742 / CB 15) (Caulobacter crescentus).